The sequence spans 89 residues: cAMP-regulated phosphoprotein 21 (89 aa).

The tract at residues 1–89 (MSEQGDLNQA…GGESLQDQTL (89 aa)) is disordered. S2 bears the N-acetylserine mark. The segment covering 9–25 (QAIAEEGGTEQETATPE) has biased composition (low complexity). Phosphoserine is present on S33. Residues 40-53 (LELQRRLEAQNQER) show a composition bias toward basic and acidic residues. S56 carries the post-translational modification Phosphoserine.

Interacts with CALM1. In terms of processing, phosphorylation at Ser-56 favors interaction with CALM1.

Its subcellular location is the cytoplasm. In terms of biological role, may act as a competitive inhibitor of calmodulin-dependent enzymes such as calcineurin in neurons. The protein is cAMP-regulated phosphoprotein 21 (ARPP21) of Pongo abelii (Sumatran orangutan).